The primary structure comprises 644 residues: Polyglycine hydrolase (644 aa).

Residues 1–23 form the signal peptide; it reads MYTSRSLFSTLASCLSLATLVAS. N-linked (GlcNAc...) asparagine glycosylation is found at Asn-100, Asn-144, Asn-159, Asn-244, and Asn-340. Cys-149 and Cys-183 are joined by a disulfide. Residue Ser-369 is part of the active site. Residues Asn-389, Asn-410, Asn-443, and Asn-486 are each glycosylated (N-linked (GlcNAc...) asparagine).

This sequence belongs to the peptidase S12 family.

It is found in the secreted. The enzyme catalyses a glycyl-glycyl-[protein] + H2O = N-terminal glycyl-[protein] + [protein]-C-terminal glycine. With respect to regulation, not inhibited by phenylmethylsulfonyl fluoride (PMSF; serine peptidase class S1 inhibitor), clavulanic acid (beta-lactamase inhibitor) or ampicillin (penicillin-binding protein (PBP) inhibitor). Its function is as follows. Serine-type endopeptidase that cleaves Gly-Gly bonds in the polyglycine linker of host plant class IV chitinases to disrupt their chitin-binding, and thereby plays a role in lowering the defense responses of the host to the fungus. Degrades Z.mays Endochitinase A (CHIA). Has low proteolytic activity on Z.mays Endochitinase B (CHIB). The sequence is that of Polyglycine hydrolase from Cochliobolus carbonum (strain 26-R-13) (Maize leaf spot fungus).